The following is a 367-amino-acid chain: Lysophosphatidic acid receptor 5 (367 aa).

At 1–25 (MQANSSAKSLPTECPDYQPIHHLHL) the chain is on the extracellular side. An N-linked (GlcNAc...) asparagine glycan is attached at Asn-4. The chain crosses the membrane as a helical span at residues 26-46 (VVYSVVLAAGLPLNALALWVF). Residues 47 to 54 (LRALRVHS) lie on the Cytoplasmic side of the membrane. Residues 55–75 (VVSVYMCNLAASDLLFTLSLP) form a helical membrane-spanning segment. Over 76-95 (LRLSYYARHYWPFPDFLCQL) the chain is Extracellular. The cysteines at positions 93 and 174 are disulfide-linked. The chain crosses the membrane as a helical span at residues 96-116 (AGAVFQMNMYGSCIFLTLINV). Over 117-135 (DRYAAIVHPLRLRHLRRPR) the chain is Cytoplasmic. The helical transmembrane segment at 136-156 (VARLLCLGVWALILVFAVPTI) threads the bilayer. Residues 157–186 (LAHQPSSCARDGRNVSLCFESFSDKLWKGS) lie on the Extracellular side of the membrane. A glycan (N-linked (GlcNAc...) asparagine) is linked at Asn-170. The chain crosses the membrane as a helical span at residues 187–207 (LLPLLLLAEALGFLLPLAAVV). The Cytoplasmic portion of the chain corresponds to 208-238 (YSSGRVFWTLARPDATRSQRRRKTVRLLLAS). A helical membrane pass occupies residues 239-259 (LVIFLLCFVPYNATLAVYGLL). Over 260–275 (RGEVVPASSEARKKVR) the chain is Extracellular. A helical membrane pass occupies residues 276–296 (GVLMVMVLLAGANCVLDPLVY). The Cytoplasmic segment spans residues 297–367 (YFSAEGFRNT…FTPSHEDSSF (71 aa)). The span at 332-350 (LTETAHASTLTTTSQGQLQ) shows a compositional bias: low complexity. Residues 332 to 367 (LTETAHASTLTTTSQGQLQPSDPRSSFTPSHEDSSF) form a disordered region. The span at 351–360 (PSDPRSSFTP) shows a compositional bias: polar residues.

This sequence belongs to the G-protein coupled receptor 1 family.

The protein resides in the cell membrane. In terms of biological role, receptor for lysophosphatidic acid (LPA), a mediator of diverse cellular activities. This is Lysophosphatidic acid receptor 5 (LPAR5) from Bos taurus (Bovine).